Reading from the N-terminus, the 429-residue chain is uncharacterized protein (429 aa).

This is an uncharacterized protein from Mycobacterium tuberculosis (strain CDC 1551 / Oshkosh).